A 521-amino-acid polypeptide reads, in one-letter code: Probable feruloyl esterase B (521 aa).

Residues 1–17 form the signal peptide; it reads MKVSSLLSVALPGAALA. 2 disulfide bridges follow: Cys26-Cys72 and Cys61-Cys111. N-linked (GlcNAc...) asparagine glycans are attached at residues Asn37, Asn51, Asn77, Asn95, Asn144, and Asn177. 3 disulfides stabilise this stretch: Cys184–Cys438, Cys253–Cys270, and Cys279–Cys288. Ser185 (acyl-ester intermediate) is an active-site residue. Residues Asp254, Asp257, Ala259, Asp261, and Ile263 each contribute to the Ca(2+) site. N-linked (GlcNAc...) asparagine glycosylation is found at Asn284, Asn347, Asn352, and Asn378. Active-site charge relay system residues include Asp397 and His437. N-linked (GlcNAc...) asparagine glycosylation is found at Asn488 and Asn511. Cys498 and Cys520 are oxidised to a cystine.

The protein belongs to the tannase family.

It is found in the secreted. It carries out the reaction feruloyl-polysaccharide + H2O = ferulate + polysaccharide.. In terms of biological role, involved in degradation of plant cell walls. Hydrolyzes the feruloyl-arabinose ester bond in arabinoxylans as well as the feruloyl-galactose and feruloyl-arabinose ester bonds in pectin. The chain is Probable feruloyl esterase B (faeB) from Aspergillus niger (strain ATCC MYA-4892 / CBS 513.88 / FGSC A1513).